Reading from the N-terminus, the 136-residue chain is Large ribosomal subunit protein uL16 (136 aa).

The protein belongs to the universal ribosomal protein uL16 family. As to quaternary structure, part of the 50S ribosomal subunit.

Functionally, binds 23S rRNA and is also seen to make contacts with the A and possibly P site tRNAs. This chain is Large ribosomal subunit protein uL16, found in Glaesserella parasuis serovar 5 (strain SH0165) (Haemophilus parasuis).